The primary structure comprises 327 residues: GTP 3',8-cyclase (327 aa).

Residues 8–232 (AFARKFYYLR…LQRSRSDGPA (225 aa)) enclose the Radical SAM core domain. Arg17 contributes to the GTP binding site. Residues Cys24 and Cys28 each contribute to the [4Fe-4S] cluster site. Tyr30 serves as a coordination point for S-adenosyl-L-methionine. Residue Cys31 coordinates [4Fe-4S] cluster. Arg66 lines the GTP pocket. S-adenosyl-L-methionine is bound at residue Gly70. Thr97 is a GTP binding site. Residue Ser121 participates in S-adenosyl-L-methionine binding. Lys158 serves as a coordination point for GTP. Position 192 (Met192) interacts with S-adenosyl-L-methionine. [4Fe-4S] cluster is bound by residues Cys255 and Cys258. Residue 260-262 (RLR) coordinates GTP. Cys272 provides a ligand contact to [4Fe-4S] cluster.

Belongs to the radical SAM superfamily. MoaA family. Monomer and homodimer. Requires [4Fe-4S] cluster as cofactor.

It carries out the reaction GTP + AH2 + S-adenosyl-L-methionine = (8S)-3',8-cyclo-7,8-dihydroguanosine 5'-triphosphate + 5'-deoxyadenosine + L-methionine + A + H(+). It functions in the pathway cofactor biosynthesis; molybdopterin biosynthesis. In terms of biological role, catalyzes the cyclization of GTP to (8S)-3',8-cyclo-7,8-dihydroguanosine 5'-triphosphate. In Photorhabdus laumondii subsp. laumondii (strain DSM 15139 / CIP 105565 / TT01) (Photorhabdus luminescens subsp. laumondii), this protein is GTP 3',8-cyclase.